A 116-amino-acid polypeptide reads, in one-letter code: Ribosome-binding factor A (116 aa).

It belongs to the RbfA family. In terms of assembly, monomer. Binds 30S ribosomal subunits, but not 50S ribosomal subunits or 70S ribosomes.

The protein resides in the cytoplasm. Its function is as follows. One of several proteins that assist in the late maturation steps of the functional core of the 30S ribosomal subunit. Associates with free 30S ribosomal subunits (but not with 30S subunits that are part of 70S ribosomes or polysomes). Required for efficient processing of 16S rRNA. May interact with the 5'-terminal helix region of 16S rRNA. This is Ribosome-binding factor A from Streptococcus pyogenes serotype M3 (strain SSI-1).